The chain runs to 473 residues: MKTLYSLRRFYHVETLFNGTLALTSRDQETTGFAWWAGNARLINLSGKLLGAHVAHAGLIVFWAGAMNLFEVAHFVPEKPMYEQGLILLPHLATLGWGVGPGGEVIDTFPYFVSGVLHLISSAVLGFGGIYHALLGPETLEESFPFFGYVWKDRNKMTTILGIHLILLGLGAFLLVFKALFFGGIYDTWAPGGGDVRKITNLTLSPSIIFGYLLKSPFGGEGWIVSVDDLEDIIGGHVWLGSICILGGIWHILTKPFAWARRALVWSGEAYLSYSLGALSVFGFIACCFVWFNNTAYPSEFYGPTGPEASQAQAFTFLVRDQRLGANVGSAQGPTGLGKYLMRSPTGEVIFGGETMRFWDLRAPWLEPLRGPNGLDLSRLKKDIQPWQERRSAEYMTHAPLGSLNSVGGVATEINAVNYVSPRSWLATSHFVLGFFLFVGHLWHAGRARAAAAGFEKGIDRDFEPVLSMTPLN.

Positions 1–14 (MKTLYSLRRFYHVE) are excised as a propeptide. Residue threonine 15 is modified to N-acetylthreonine. Residue threonine 15 is modified to Phosphothreonine. Helical transmembrane passes span 69–93 (LFEV…PHLA), 134–155 (LLGP…KDRN), 178–200 (KALF…RKIT), 255–275 (KPFA…LSYS), and 291–312 (WFNN…ASQA). Glutamate 367 serves as a coordination point for [CaMn4O5] cluster. The helical transmembrane segment at 447 to 471 (RARAAAAGFEKGIDRDFEPVLSMTP) threads the bilayer.

It belongs to the PsbB/PsbC family. PsbC subfamily. PSII is composed of 1 copy each of membrane proteins PsbA, PsbB, PsbC, PsbD, PsbE, PsbF, PsbH, PsbI, PsbJ, PsbK, PsbL, PsbM, PsbT, PsbX, PsbY, PsbZ, Psb30/Ycf12, at least 3 peripheral proteins of the oxygen-evolving complex and a large number of cofactors. It forms dimeric complexes. The cofactor is Binds multiple chlorophylls and provides some of the ligands for the Ca-4Mn-5O cluster of the oxygen-evolving complex. It may also provide a ligand for a Cl- that is required for oxygen evolution. PSII binds additional chlorophylls, carotenoids and specific lipids..

The protein localises to the plastid. The protein resides in the chloroplast thylakoid membrane. Its function is as follows. One of the components of the core complex of photosystem II (PSII). It binds chlorophyll and helps catalyze the primary light-induced photochemical processes of PSII. PSII is a light-driven water:plastoquinone oxidoreductase, using light energy to abstract electrons from H(2)O, generating O(2) and a proton gradient subsequently used for ATP formation. This chain is Photosystem II CP43 reaction center protein, found in Fagopyrum esculentum subsp. ancestrale (Wild buckwheat).